A 403-amino-acid chain; its full sequence is Acetate kinase (403 aa).

Asn9 provides a ligand contact to Mg(2+). An ATP-binding site is contributed by Lys16. Arg93 serves as a coordination point for substrate. Asp150 serves as the catalytic Proton donor/acceptor. Residues 210–214, 284–286, and 332–336 each bind ATP; these read HLGNG, DFR, and GVGEN. Glu388 contributes to the Mg(2+) binding site.

It belongs to the acetokinase family. As to quaternary structure, homodimer. The cofactor is Mg(2+). Mn(2+) is required as a cofactor.

Its subcellular location is the cytoplasm. It catalyses the reaction acetate + ATP = acetyl phosphate + ADP. It functions in the pathway metabolic intermediate biosynthesis; acetyl-CoA biosynthesis; acetyl-CoA from acetate: step 1/2. Catalyzes the formation of acetyl phosphate from acetate and ATP. Can also catalyze the reverse reaction. The sequence is that of Acetate kinase from Corynebacterium jeikeium (strain K411).